The sequence spans 880 residues: Beta-glucosidase 2 (880 aa).

A signal peptide spans 1-17 (MLLILELLVLIIGLGVA). N-linked (GlcNAc...) asparagine glycosylation is found at Asn-24, Asn-77, and Asn-271. Residue Asp-299 is part of the active site. N-linked (GlcNAc...) asparagine glycans are attached at residues Asn-336, Asn-343, Asn-376, Asn-548, Asn-589, Asn-712, Asn-743, and Asn-794.

This sequence belongs to the glycosyl hydrolase 3 family.

It catalyses the reaction Hydrolysis of terminal, non-reducing beta-D-glucosyl residues with release of beta-D-glucose.. It participates in glycan metabolism; cellulose degradation. The protein is Beta-glucosidase 2 (BGL2) of Saccharomycopsis fibuligera (Yeast).